The primary structure comprises 21 residues: Brevinin-2-related peptide (21 aa).

Leucine 21 carries the leucine amide modification.

Expressed by the skin glands.

It localises to the secreted. Its function is as follows. Antimicrobial peptide with activity against Gram-negative and Gram-positive bacteria (MIC=13 uM against E.coli, MIC=25 uM against S.aureus) and fungi (MIC=25 uM against C.albicans). Also shows hemolytic activity (HC(50)=50 uM). In vitro, shows moderate inhibitory activity against HIV. This chain is Brevinin-2-related peptide, found in Lithobates septentrionalis (Mink frog).